We begin with the raw amino-acid sequence, 238 residues long: Probable transcriptional regulatory protein CT_457 (238 aa).

Positions 1–21 are disordered; that stretch reads MAGHSKWANTKHRKERADHKK. Basic residues predominate over residues 9-21; that stretch reads NTKHRKERADHKK.

The protein belongs to the TACO1 family.

It is found in the cytoplasm. This chain is Probable transcriptional regulatory protein CT_457, found in Chlamydia trachomatis serovar D (strain ATCC VR-885 / DSM 19411 / UW-3/Cx).